Reading from the N-terminus, the 98-residue chain is NADH-ubiquinone oxidoreductase chain 4L (98 aa).

3 consecutive transmembrane segments (helical) span residues Met-1–Met-21, Ser-29–Leu-49, and Ile-61–Val-81.

Belongs to the complex I subunit 4L family. As to quaternary structure, core subunit of respiratory chain NADH dehydrogenase (Complex I) which is composed of 45 different subunits.

The protein localises to the mitochondrion inner membrane. The enzyme catalyses a ubiquinone + NADH + 5 H(+)(in) = a ubiquinol + NAD(+) + 4 H(+)(out). Its function is as follows. Core subunit of the mitochondrial membrane respiratory chain NADH dehydrogenase (Complex I) which catalyzes electron transfer from NADH through the respiratory chain, using ubiquinone as an electron acceptor. Part of the enzyme membrane arm which is embedded in the lipid bilayer and involved in proton translocation. The polypeptide is NADH-ubiquinone oxidoreductase chain 4L (MT-ND4L) (Sorex unguiculatus (Long-clawed shrew)).